The following is a 122-amino-acid chain: Large ribosomal subunit protein uL14 (122 aa).

Belongs to the universal ribosomal protein uL14 family. As to quaternary structure, part of the 50S ribosomal subunit. Forms a cluster with proteins L3 and L19. In the 70S ribosome, L14 and L19 interact and together make contacts with the 16S rRNA in bridges B5 and B8.

In terms of biological role, binds to 23S rRNA. Forms part of two intersubunit bridges in the 70S ribosome. This is Large ribosomal subunit protein uL14 from Methylibium petroleiphilum (strain ATCC BAA-1232 / LMG 22953 / PM1).